A 514-amino-acid chain; its full sequence is Probable cysteine protease ATG4 (514 aa).

The segment covering 1 to 15 has biased composition (basic and acidic residues); it reads MAREDASVPRSHDSA. 2 disordered regions span residues 1–28 and 61–84; these read MARE…EIPV and DSSD…DSAQ. Catalysis depends on Cys-166, which acts as the Nucleophile. Residues Asp-336 and His-338 contribute to the active site. Positions 461–514 are disordered; it reads ATPSAEDTVPVSTLSASESEITTSSYETPTSKDDNSSRASLDVVVLDTTGEQQE. Over residues 472–489 the composition is skewed to low complexity; sequence STLSASESEITTSSYETP.

Belongs to the peptidase C54 family.

Its subcellular location is the cytoplasm. It localises to the nucleus. It is found in the preautophagosomal structure. It catalyses the reaction [protein]-C-terminal L-amino acid-glycyl-phosphatidylethanolamide + H2O = [protein]-C-terminal L-amino acid-glycine + a 1,2-diacyl-sn-glycero-3-phosphoethanolamine. In terms of biological role, cysteine protease that plays a key role in cytoplasm to vacuole transport (Cvt) and autophagy by mediating both proteolytic activation and delipidation of ATG8. Required for selective autophagic degradation of the nucleus (nucleophagy) as well as for mitophagy which contributes to regulate mitochondrial quantity and quality by eliminating the mitochondria to a basal level to fulfill cellular energy requirements and preventing excess ROS production. The protease activity is required for proteolytic activation of ATG8: cleaves the C-terminal amino acid of ATG8 to reveal a C-terminal glycine. ATG8 ubiquitin-like activity requires the exposure of the glycine at the C-terminus for its conjugation to phosphatidylethanolamine (PE) and its insertion to membranes, which is necessary for autophagy. The ATG8-PE conjugate mediates tethering between adjacent membranes and stimulates membrane hemifusion, leading to expansion of the autophagosomal membrane during autophagy. In addition to the protease activity, also catalyzes deconjugation of PE-conjugated forms of ATG8 during macroautophagy: ATG8 delipidation is required to release the protein from membranes, which facilitates multiple events during macroautophagy, and especially for efficient autophagosome biogenesis, the assembly of ATG9-containing tubulovesicular clusters into phagophores/autophagosomes, and for the disassembly of PAS-associated ATG components. ATG8 delipidation by ATG4 also recycles ATG8-PE generated on inappropriate membranes to maintain a reservoir of unlipidated ATG8 that is required for autophagosome formation at the PAS. The polypeptide is Probable cysteine protease ATG4 (ATG4) (Scheffersomyces stipitis (strain ATCC 58785 / CBS 6054 / NBRC 10063 / NRRL Y-11545) (Yeast)).